The chain runs to 193 residues: dCTP deaminase (193 aa).

Residues 110 to 115, aspartate 128, 136 to 138, tyrosine 171, lysine 178, and glutamine 182 each bind dCTP; these read RSSLAR and VLE. Glutamate 138 functions as the Proton donor/acceptor in the catalytic mechanism. The disordered stretch occupies residues 171–193; the sequence is YNKRKNAKYKDQQDAVASRISQD.

It belongs to the dCTP deaminase family. Homotrimer.

It carries out the reaction dCTP + H2O + H(+) = dUTP + NH4(+). The protein operates within pyrimidine metabolism; dUMP biosynthesis; dUMP from dCTP (dUTP route): step 1/2. Its function is as follows. Catalyzes the deamination of dCTP to dUTP. In Shewanella oneidensis (strain ATCC 700550 / JCM 31522 / CIP 106686 / LMG 19005 / NCIMB 14063 / MR-1), this protein is dCTP deaminase.